Reading from the N-terminus, the 346-residue chain is Biotin synthase (346 aa).

The Radical SAM core domain occupies 38–256 (QQVQVSTLLS…IAVARIMMPT (219 aa)). [4Fe-4S] cluster contacts are provided by C53, C57, and C60. 4 residues coordinate [2Fe-2S] cluster: C97, C128, C188, and R260.

Belongs to the radical SAM superfamily. Biotin synthase family. Homodimer. [4Fe-4S] cluster is required as a cofactor. Requires [2Fe-2S] cluster as cofactor.

The catalysed reaction is (4R,5S)-dethiobiotin + (sulfur carrier)-SH + 2 reduced [2Fe-2S]-[ferredoxin] + 2 S-adenosyl-L-methionine = (sulfur carrier)-H + biotin + 2 5'-deoxyadenosine + 2 L-methionine + 2 oxidized [2Fe-2S]-[ferredoxin]. The protein operates within cofactor biosynthesis; biotin biosynthesis; biotin from 7,8-diaminononanoate: step 2/2. Its function is as follows. Catalyzes the conversion of dethiobiotin (DTB) to biotin by the insertion of a sulfur atom into dethiobiotin via a radical-based mechanism. This chain is Biotin synthase, found in Salmonella choleraesuis (strain SC-B67).